The sequence spans 282 residues: DNA processing protein DprA (282 aa).

This sequence belongs to the DprA/Smf family. In terms of assembly, homodimer; forms tail-to-tail dimers, forms nucleoprotein complex (NPC) which requires at least 30 nucleotides (nt) of ssDNA becoming optimal with 50 nt. Interacts with RecA, forms mixed DprA-RecA-ssDNA filaments. Interacts with ComFA and ComFC.

It is found in the cytoplasm. Its function is as follows. Protein that helps load RecA onto ssDNA during transformation. Required for DNA transformation. Not required for DNA uptake but for a later stage of transformation. Thought to interact at the cell pole with newly imported transforming ssDNA which it binds cooperatively, protecting linear and circular ssDNA from nuclease action. Forms bridges between DNA segments. Favors the loading of RecA onto ssDNA and formation of RecA-DNA filaments, triggering RecA-catalysis of ATP-driven homologous DNA pairing. This Streptococcus pneumoniae (strain ATCC BAA-255 / R6) protein is DNA processing protein DprA.